The following is a 68-amino-acid chain: U19-ctenitoxin-Pn1a (68 aa).

At Gln1 the chain carries Pyrrolidone carboxylic acid. Intrachain disulfides connect Cys8-Cys19, Cys13-Cys28, Cys18-Cys51, Cys38-Cys59, and Cys53-Cys65.

Expressed by the venom gland.

The protein resides in the secreted. In terms of biological role, non-toxic to mice and insects. The sequence is that of U19-ctenitoxin-Pn1a from Phoneutria nigriventer (Brazilian armed spider).